A 215-amino-acid chain; its full sequence is Adenylate kinase (215 aa).

10-15 contacts ATP; the sequence is GSGKGT. Positions 30 to 59 are NMP; sequence STGDLFRTNIENDTPLGKEIKQIVENGQLV. Residues Thr31, Arg36, 57-59, 85-88, and Gln92 contribute to the AMP site; these read QLV and GFPR. The LID stretch occupies residues 121–158; the sequence is GRRICQSCCKIFNIYTLPTKEKEICDFCQGILYQRKDD. Position 122 (Arg122) interacts with ATP. Residues Cys125 and Cys128 each contribute to the Zn(2+) site. 131 to 132 contacts ATP; that stretch reads IF. Residues Cys145 and Cys148 each coordinate Zn(2+). Arg155 and Arg166 together coordinate AMP. Residue Lys194 coordinates ATP.

The protein belongs to the adenylate kinase family. As to quaternary structure, monomer.

The protein localises to the cytoplasm. It catalyses the reaction AMP + ATP = 2 ADP. It participates in purine metabolism; AMP biosynthesis via salvage pathway; AMP from ADP: step 1/1. In terms of biological role, catalyzes the reversible transfer of the terminal phosphate group between ATP and AMP. Plays an important role in cellular energy homeostasis and in adenine nucleotide metabolism. This Borrelia recurrentis (strain A1) protein is Adenylate kinase.